Reading from the N-terminus, the 147-residue chain is D-aminoacyl-tRNA deacylase (147 aa).

Residues 138 to 139 carry the Gly-cisPro motif, important for rejection of L-amino acids motif; sequence GP.

This sequence belongs to the DTD family. As to quaternary structure, homodimer.

It localises to the cytoplasm. The catalysed reaction is glycyl-tRNA(Ala) + H2O = tRNA(Ala) + glycine + H(+). The enzyme catalyses a D-aminoacyl-tRNA + H2O = a tRNA + a D-alpha-amino acid + H(+). Its function is as follows. An aminoacyl-tRNA editing enzyme that deacylates mischarged D-aminoacyl-tRNAs. Also deacylates mischarged glycyl-tRNA(Ala), protecting cells against glycine mischarging by AlaRS. Acts via tRNA-based rather than protein-based catalysis; rejects L-amino acids rather than detecting D-amino acids in the active site. By recycling D-aminoacyl-tRNA to D-amino acids and free tRNA molecules, this enzyme counteracts the toxicity associated with the formation of D-aminoacyl-tRNA entities in vivo and helps enforce protein L-homochirality. The protein is D-aminoacyl-tRNA deacylase of Prosthecochloris aestuarii (strain DSM 271 / SK 413).